Reading from the N-terminus, the 356-residue chain is Protein RecA (356 aa).

An ATP-binding site is contributed by 68–75; the sequence is GPESSGKT.

Belongs to the RecA family.

It localises to the cytoplasm. Functionally, can catalyze the hydrolysis of ATP in the presence of single-stranded DNA, the ATP-dependent uptake of single-stranded DNA by duplex DNA, and the ATP-dependent hybridization of homologous single-stranded DNAs. It interacts with LexA causing its activation and leading to its autocatalytic cleavage. The chain is Protein RecA from Clostridium botulinum (strain Alaska E43 / Type E3).